Here is a 1054-residue protein sequence, read N- to C-terminus: Leucine-rich repeats and immunoglobulin-like domains protein 2 (1054 aa).

The signal sequence occupies residues 1–39 (MAAAPRGIWEQRRLGCGLGPLARLLILAQALRLLPAARA). The 35-residue stretch at 40–74 (GLCPAPCACRLPLLDCSRRKLPAPSWRALSGPLPS) folds into the LRRNT domain. 15 LRR repeats span residues 75-96 (DISS…LESQ), 97-118 (TLQE…GEPT), 120-141 (NITL…AFEL), 144-165 (ALES…SFPR), 167-188 (SLKY…CFDN), 192-213 (SLLV…VFKL), 215-236 (HLQF…TFQG), 239-260 (SLRS…AFFG), 263-284 (NMEE…WLYG), 287-308 (MLQQ…AWEF), 311-332 (RLSE…AFVG), 335-356 (LLER…VFRF), 359-381 (NLQT…SEAF), 386-407 (SLTK…AFIG), and 410-431 (SLEY…AFSQ). The N-linked (GlcNAc...) asparagine glycan is linked to Asn90. Asn120 is a glycosylation site (N-linked (GlcNAc...) asparagine). Residues Asn172 and Asn188 are each glycosylated (N-linked (GlcNAc...) asparagine). Asn273 carries N-linked (GlcNAc...) asparagine glycosylation. 5 N-linked (GlcNAc...) asparagine glycosylation sites follow: Asn440, Asn467, Asn513, Asn570, and Asn588. In terms of domain architecture, LRRCT spans 442-493 (SSLLCDCHLKWLLQWLVDNNFHHSVNVSCAHPEWLAGQSILNVDLKDFVCDD). 3 consecutive Ig-like C2-type domains span residues 497–596 (PQIR…AKLT), 601–690 (PSFL…ASLT), and 695–784 (PSFI…NVIS). An intrachain disulfide couples Cys518 to Cys579. Cysteines 622 and 674 form a disulfide. Asn686 and Asn727 each carry an N-linked (GlcNAc...) asparagine glycan. Cys716 and Cys765 are joined by a disulfide. Residues 807 to 827 (IVIIVVVCCVVGTSLIWVIVI) traverse the membrane as a helical segment. Position 905 is a phosphotyrosine (Tyr905). Residue Asn1024 is glycosylated (N-linked (GlcNAc...) asparagine).

It is found in the cell membrane. It localises to the cytoplasm. This is Leucine-rich repeats and immunoglobulin-like domains protein 2 (Lrig2) from Mus musculus (Mouse).